Consider the following 250-residue polypeptide: 23S rRNA (guanosine-2'-O-)-methyltransferase RlmB (250 aa).

Residues Gly-198, Ile-218, and Leu-227 each contribute to the S-adenosyl-L-methionine site.

The protein belongs to the class IV-like SAM-binding methyltransferase superfamily. RNA methyltransferase TrmH family. RlmB subfamily.

It is found in the cytoplasm. The enzyme catalyses guanosine(2251) in 23S rRNA + S-adenosyl-L-methionine = 2'-O-methylguanosine(2251) in 23S rRNA + S-adenosyl-L-homocysteine + H(+). Specifically methylates the ribose of guanosine 2251 in 23S rRNA. This chain is 23S rRNA (guanosine-2'-O-)-methyltransferase RlmB, found in Coxiella burnetii (strain RSA 493 / Nine Mile phase I).